Consider the following 691-residue polypeptide: Elongation factor G (691 aa).

The tr-type G domain occupies 8–282 (ERVRNIGIAA…AVVDYLPAPI (275 aa)). GTP contacts are provided by residues 17 to 24 (AHIDAGKT), 81 to 85 (DTPGH), and 135 to 138 (NKMD).

It belongs to the TRAFAC class translation factor GTPase superfamily. Classic translation factor GTPase family. EF-G/EF-2 subfamily.

The protein resides in the cytoplasm. Functionally, catalyzes the GTP-dependent ribosomal translocation step during translation elongation. During this step, the ribosome changes from the pre-translocational (PRE) to the post-translocational (POST) state as the newly formed A-site-bound peptidyl-tRNA and P-site-bound deacylated tRNA move to the P and E sites, respectively. Catalyzes the coordinated movement of the two tRNA molecules, the mRNA and conformational changes in the ribosome. This Thermosynechococcus vestitus (strain NIES-2133 / IAM M-273 / BP-1) protein is Elongation factor G.